An 84-amino-acid chain; its full sequence is Large ribosomal subunit protein bL31B (84 aa).

The protein belongs to the bacterial ribosomal protein bL31 family. Type B subfamily. As to quaternary structure, part of the 50S ribosomal subunit.

This Streptomyces griseus subsp. griseus (strain JCM 4626 / CBS 651.72 / NBRC 13350 / KCC S-0626 / ISP 5235) protein is Large ribosomal subunit protein bL31B.